Consider the following 318-residue polypeptide: NADH-ubiquinone oxidoreductase chain 1 (318 aa).

A run of 8 helical transmembrane segments spans residues 2-22, 70-90, 100-120, 136-156, 171-191, 231-251, 253-273, and 293-313; these read FFINILTLLVPILIAMAFLTL, LFIIAPTLSLTLALSLWVPLP, LGILFILATSSLSVYSILWSG, VAQTISYEVTMAIILLSVLLM, HMWLLLPAWPMAMMWFISTLA, IILMNALTTIIFLGPLYYINL, ELYSTNFMMEALLLSSTFLWI, and FLPLTLALCMWHISLPIFTAG.

Belongs to the complex I subunit 1 family. As to quaternary structure, core subunit of respiratory chain NADH dehydrogenase (Complex I) which is composed of 45 different subunits.

It localises to the mitochondrion inner membrane. The catalysed reaction is a ubiquinone + NADH + 5 H(+)(in) = a ubiquinol + NAD(+) + 4 H(+)(out). In terms of biological role, core subunit of the mitochondrial membrane respiratory chain NADH dehydrogenase (Complex I) which catalyzes electron transfer from NADH through the respiratory chain, using ubiquinone as an electron acceptor. Essential for the catalytic activity and assembly of complex I. The sequence is that of NADH-ubiquinone oxidoreductase chain 1 (Mtnd1) from Mus musculus (Mouse).